A 431-amino-acid polypeptide reads, in one-letter code: 4-hydroxy-3-methylbut-2-en-1-yl diphosphate synthase (flavodoxin) (431 aa).

The interval 1–21 is disordered; sequence MNKLENPSQRDVAGPSPRHKT. Cys-310, Cys-313, Cys-356, and Glu-363 together coordinate [4Fe-4S] cluster.

The protein belongs to the IspG family. [4Fe-4S] cluster serves as cofactor.

It carries out the reaction (2E)-4-hydroxy-3-methylbut-2-enyl diphosphate + oxidized [flavodoxin] + H2O + 2 H(+) = 2-C-methyl-D-erythritol 2,4-cyclic diphosphate + reduced [flavodoxin]. It participates in isoprenoid biosynthesis; isopentenyl diphosphate biosynthesis via DXP pathway; isopentenyl diphosphate from 1-deoxy-D-xylulose 5-phosphate: step 5/6. In terms of biological role, converts 2C-methyl-D-erythritol 2,4-cyclodiphosphate (ME-2,4cPP) into 1-hydroxy-2-methyl-2-(E)-butenyl 4-diphosphate. This Nitrobacter hamburgensis (strain DSM 10229 / NCIMB 13809 / X14) protein is 4-hydroxy-3-methylbut-2-en-1-yl diphosphate synthase (flavodoxin).